Consider the following 324-residue polypeptide: MSFFFVDLRPMNRSATHIVTEFILLGFPGCWKIQIFLFSLFLVIYVLTLLGNGAIIYAVRCNPLLHTPMYFLLGNFAFLEIWYVSSTIPNMLVNILSKTKAISFSGCFLQFYFFFSLGTTECLFLAVMAYDRYLAICHPLQYPAIMTVRFCGKLVSFCWLIGFLGYPIPIFYISQLPFCGPNIIDHFLCDMDPLMALSCAPAPITECIFYTQSSLVLFFTSMYILRSYILLLTAVFQVPSAAGRRKAFSTCGSHLVVVSLFYGTVMVMYVSPTYGIPTLLQKILTLVYSVTTPLFNPLIYTLRNKDMKLALRNVLFGMRIRQNS.

Topologically, residues 1 to 35 (MSFFFVDLRPMNRSATHIVTEFILLGFPGCWKIQI) are extracellular. An N-linked (GlcNAc...) asparagine glycan is attached at Asn-12. A helical membrane pass occupies residues 36 to 56 (FLFSLFLVIYVLTLLGNGAII). The Cytoplasmic segment spans residues 57–64 (YAVRCNPL). Residues 65-85 (LHTPMYFLLGNFAFLEIWYVS) form a helical membrane-spanning segment. Residues 86-109 (STIPNMLVNILSKTKAISFSGCFL) lie on the Extracellular side of the membrane. An intrachain disulfide couples Cys-107 to Cys-199. Residues 110 to 130 (QFYFFFSLGTTECLFLAVMAY) form a helical membrane-spanning segment. Over 131–149 (DRYLAICHPLQYPAIMTVR) the chain is Cytoplasmic. Residues 150–170 (FCGKLVSFCWLIGFLGYPIPI) form a helical membrane-spanning segment. The Extracellular portion of the chain corresponds to 171–207 (FYISQLPFCGPNIIDHFLCDMDPLMALSCAPAPITEC). The helical transmembrane segment at 208 to 227 (IFYTQSSLVLFFTSMYILRS) threads the bilayer. Residues 228–247 (YILLLTAVFQVPSAAGRRKA) are Cytoplasmic-facing. Residues 248–268 (FSTCGSHLVVVSLFYGTVMVM) traverse the membrane as a helical segment. The Extracellular segment spans residues 269 to 281 (YVSPTYGIPTLLQ). A helical membrane pass occupies residues 282–302 (KILTLVYSVTTPLFNPLIYTL). Residues 303–324 (RNKDMKLALRNVLFGMRIRQNS) lie on the Cytoplasmic side of the membrane.

It belongs to the G-protein coupled receptor 1 family.

It localises to the cell membrane. Odorant receptor. In Homo sapiens (Human), this protein is Olfactory receptor 11H4 (OR11H4).